The primary structure comprises 37 residues: Large ribosomal subunit protein bL36 (37 aa).

This sequence belongs to the bacterial ribosomal protein bL36 family.

The sequence is that of Large ribosomal subunit protein bL36 from Syntrophotalea carbinolica (strain DSM 2380 / NBRC 103641 / GraBd1) (Pelobacter carbinolicus).